A 119-amino-acid chain; its full sequence is uncharacterized protein (119 aa).

The protein resides in the mitochondrion. This is an uncharacterized protein from Arabidopsis thaliana (Mouse-ear cress).